Here is a 148-residue protein sequence, read N- to C-terminus: Ribonuclease H (148 aa).

Residues Asp-3–Ala-144 enclose the RNase H type-1 domain. 4 residues coordinate Mg(2+): Asp-12, Glu-50, Asp-72, and Asp-136. Positions Gly-125–Arg-148 are disordered.

It belongs to the RNase H family. As to quaternary structure, monomer. The cofactor is Mg(2+).

Its subcellular location is the cytoplasm. It catalyses the reaction Endonucleolytic cleavage to 5'-phosphomonoester.. Endonuclease that specifically degrades the RNA of RNA-DNA hybrids. The sequence is that of Ribonuclease H from Pseudomonas paraeruginosa (strain DSM 24068 / PA7) (Pseudomonas aeruginosa (strain PA7)).